Here is a 148-residue protein sequence, read N- to C-terminus: Small ribosomal subunit protein bS6 (148 aa).

Positions 96 to 148 are disordered; it reads HEEGQSAMLTRRDDRRERDGDDRPRRREGGFDRGDRGDRSPRRPRDNEAGEGA.

Belongs to the bacterial ribosomal protein bS6 family.

Binds together with bS18 to 16S ribosomal RNA. In Brucella suis (strain ATCC 23445 / NCTC 10510), this protein is Small ribosomal subunit protein bS6.